A 179-amino-acid chain; its full sequence is UPF0200 protein TV0279 (179 aa).

Position 6–13 (6–13 (GMPGAGKD)) interacts with ATP.

This sequence belongs to the UPF0200 family.

The chain is UPF0200 protein TV0279 from Thermoplasma volcanium (strain ATCC 51530 / DSM 4299 / JCM 9571 / NBRC 15438 / GSS1).